A 748-amino-acid chain; its full sequence is Polyribonucleotide nucleotidyltransferase (748 aa).

Mg(2+) contacts are provided by aspartate 487 and aspartate 493. One can recognise a KH domain in the interval 554-613 (PSTTTIKIDKDKIRDIIGPSGKVIKEICETSGAKIDISDDGTVSVYASDRDKLKVALDKI). Residues 623–691 (GEIFNGTVVK…NKGKAKLTIK (69 aa)) form the S1 motif domain. The tract at residues 693-733 (ADKDKSSNNTKPKTHVNNTKDNSEPEQRRDSSKKRAWNEDN) is disordered. The span at 699–712 (SNNTKPKTHVNNTK) shows a compositional bias: polar residues. Basic and acidic residues predominate over residues 713–722 (DNSEPEQRRD).

The protein belongs to the polyribonucleotide nucleotidyltransferase family. The cofactor is Mg(2+).

It is found in the cytoplasm. It catalyses the reaction RNA(n+1) + phosphate = RNA(n) + a ribonucleoside 5'-diphosphate. In terms of biological role, involved in mRNA degradation. Catalyzes the phosphorolysis of single-stranded polyribonucleotides processively in the 3'- to 5'-direction. The sequence is that of Polyribonucleotide nucleotidyltransferase from Rickettsia peacockii (strain Rustic).